The following is an 814-amino-acid chain: Valine--tRNA ligase (814 aa).

A 'HIGH' region motif is present at residues 46–56; that stretch reads PTVSGQLHIGH. The 'KMSKS' region motif lies at 536–540; that stretch reads KMSKS. Lysine 539 contacts ATP.

Belongs to the class-I aminoacyl-tRNA synthetase family. ValS type 2 subfamily. As to quaternary structure, monomer.

It is found in the cytoplasm. The catalysed reaction is tRNA(Val) + L-valine + ATP = L-valyl-tRNA(Val) + AMP + diphosphate. Functionally, catalyzes the attachment of valine to tRNA(Val). As ValRS can inadvertently accommodate and process structurally similar amino acids such as threonine, to avoid such errors, it has a 'posttransfer' editing activity that hydrolyzes mischarged Thr-tRNA(Val) in a tRNA-dependent manner. The protein is Valine--tRNA ligase of Rickettsia prowazekii (strain Madrid E).